Reading from the N-terminus, the 514-residue chain is Na(+)/H(+) antiporter NhaB (514 aa).

Transmembrane regions (helical) follow at residues 23 to 43, 63 to 83, 97 to 117, 120 to 140, 144 to 164, 202 to 222, 238 to 258, 303 to 323, 357 to 377, 391 to 411, 447 to 467, and 475 to 495; these read LALLVFLIVNPFIFLANPFIA, PLLPGGLLAIEAVIIGMTSAA, LLLMFMVAGIYFMKQLLLFIF, LLLSIRSKMVLSLAFCVAAAF, FLDALTVVAVVISVAVGFYGI, LMMHAGVGTALGGVMTMVGEP, FFLRMSPVTVPVLVCGLLTCM, AVIGVWLVTALALHLAEVGLI, LTVFFSIVAVIIDQHLFAPII, LFYLFNGLLSSISDNVFVGTI, ATPNGQAAFLFLLTSALAPLI, and VWMALPYTIVLTLIGLLCVEF.

Belongs to the NhaB Na(+)/H(+) (TC 2.A.34) antiporter family.

It is found in the cell inner membrane. The enzyme catalyses 2 Na(+)(in) + 3 H(+)(out) = 2 Na(+)(out) + 3 H(+)(in). Functionally, na(+)/H(+) antiporter that extrudes sodium in exchange for external protons. This Salmonella choleraesuis (strain SC-B67) protein is Na(+)/H(+) antiporter NhaB.